A 197-amino-acid polypeptide reads, in one-letter code: Imidazoleglycerol-phosphate dehydratase (197 aa).

This sequence belongs to the imidazoleglycerol-phosphate dehydratase family.

It localises to the cytoplasm. The catalysed reaction is D-erythro-1-(imidazol-4-yl)glycerol 3-phosphate = 3-(imidazol-4-yl)-2-oxopropyl phosphate + H2O. It participates in amino-acid biosynthesis; L-histidine biosynthesis; L-histidine from 5-phospho-alpha-D-ribose 1-diphosphate: step 6/9. This is Imidazoleglycerol-phosphate dehydratase from Pseudomonas fluorescens (strain Pf0-1).